Reading from the N-terminus, the 641-residue chain is Chaperone protein DnaK (641 aa).

A Phosphothreonine; by autocatalysis modification is found at threonine 199. The tract at residues 603–627 (YGQQQAEGGAQAAGAAGGSSKADDA) is disordered. A compositionally biased stretch (low complexity) spans 604 to 616 (GQQQAEGGAQAAG).

This sequence belongs to the heat shock protein 70 family.

Functionally, acts as a chaperone. The polypeptide is Chaperone protein DnaK (Azoarcus sp. (strain BH72)).